Reading from the N-terminus, the 438-residue chain is Methylenetetrahydrofolate--tRNA-(uracil-5-)-methyltransferase TrmFO (438 aa).

Residue 10–15 (GGGLAG) participates in FAD binding.

The protein belongs to the MnmG family. TrmFO subfamily. It depends on FAD as a cofactor.

Its subcellular location is the cytoplasm. The catalysed reaction is uridine(54) in tRNA + (6R)-5,10-methylene-5,6,7,8-tetrahydrofolate + NADH + H(+) = 5-methyluridine(54) in tRNA + (6S)-5,6,7,8-tetrahydrofolate + NAD(+). The enzyme catalyses uridine(54) in tRNA + (6R)-5,10-methylene-5,6,7,8-tetrahydrofolate + NADPH + H(+) = 5-methyluridine(54) in tRNA + (6S)-5,6,7,8-tetrahydrofolate + NADP(+). In terms of biological role, catalyzes the folate-dependent formation of 5-methyl-uridine at position 54 (M-5-U54) in all tRNAs. The polypeptide is Methylenetetrahydrofolate--tRNA-(uracil-5-)-methyltransferase TrmFO (Trichormus variabilis (strain ATCC 29413 / PCC 7937) (Anabaena variabilis)).